A 64-amino-acid polypeptide reads, in one-letter code: Large ribosomal subunit protein bL33 (64 aa).

Belongs to the bacterial ribosomal protein bL33 family.

This chain is Large ribosomal subunit protein bL33, found in Gloeothece citriformis (strain PCC 7424) (Cyanothece sp. (strain PCC 7424)).